A 26-amino-acid chain; its full sequence is Hainantoxin F1-31.97 (26 aa).

Intrachain disulfides connect cysteine 2/cysteine 16 and cysteine 9/cysteine 21.

The protein belongs to the neurotoxin 10 (Hwtx-1) family. 17 (Hntx-9) subfamily. Expressed by the venom gland.

The protein resides in the secreted. Its function is as follows. Ion channel inhibitor. The sequence is that of Hainantoxin F1-31.97 from Cyriopagopus hainanus (Chinese bird spider).